Here is a 436-residue protein sequence, read N- to C-terminus: Magnesium transporter MRS2-B (436 aa).

2 stretches are compositionally biased toward low complexity: residues 1 to 14 (MSAAAASSAAGDSA) and 29 to 54 (VASVSSPSLPSAPPGALAGGRRFPGG). The disordered stretch occupies residues 1-60 (MSAAAASSAAGDSAKQPLLHHQRGNPPHVASVSSPSLPSAPPGALAGGRRFPGGLDVPNL). Residues 176–242 (LALEAACSFL…RDEIEQLMDD (67 aa)) are a coiled coil. 2 helical membrane-spanning segments follow: residues 372-392 (LLLTTATFVVAIFGVVAGIFG) and 408-428 (WVLIITGVIGAFIFCGFLWFF). Positions 392–394 (GMN) match the Required for magnesium transport activity motif.

The protein belongs to the CorA metal ion transporter (MIT) (TC 1.A.35.5) family.

It is found in the membrane. In terms of biological role, magnesium transporter that may mediate the influx of magnesium. In Oryza sativa subsp. indica (Rice), this protein is Magnesium transporter MRS2-B (MRS2-B).